The primary structure comprises 616 residues: Chaperone protein HscA homolog (616 aa).

The protein belongs to the heat shock protein 70 family.

Its function is as follows. Probable chaperone. Has a low intrinsic ATPase activity which is markedly stimulated by HscB. The polypeptide is Chaperone protein HscA homolog (Vibrio cholerae serotype O1 (strain ATCC 39315 / El Tor Inaba N16961)).